A 382-amino-acid chain; its full sequence is Alkanesulfonate monooxygenase (382 aa).

The protein belongs to the SsuD family. As to quaternary structure, homotetramer.

The enzyme catalyses an alkanesulfonate + FMNH2 + O2 = an aldehyde + FMN + sulfite + H2O + 2 H(+). Functionally, catalyzes the desulfonation of aliphatic sulfonates. The protein is Alkanesulfonate monooxygenase of Yersinia pestis bv. Antiqua (strain Antiqua).